A 163-amino-acid polypeptide reads, in one-letter code: Epithelial membrane protein 3 (163 aa).

The chain crosses the membrane as a helical span at residues 4–24; the sequence is LLLVVSALHILILILLFVATL. N-linked (GlcNAc...) asparagine glycans are attached at residues Asn47 and Asn56. The next 3 helical transmembrane spans lie at 66–86, 100–120, and 139–159; these read VQVL…LFMF, TGLC…IYAI, and FALA…YIHL.

The protein belongs to the PMP-22/EMP/MP20 family.

The protein localises to the membrane. Its function is as follows. Probably involved in cell proliferation and cell-cell interactions. The polypeptide is Epithelial membrane protein 3 (EMP3) (Homo sapiens (Human)).